Consider the following 181-residue polypeptide: Large ribosomal subunit protein uL22 (181 aa).

The segment at 157-181 (PEAAKKPGKKTSAVEKSKKATAATH) is disordered.

Belongs to the universal ribosomal protein uL22 family.

The protein is Large ribosomal subunit protein uL22 (RpL17) of Biphyllus lunatus (Beetle).